The chain runs to 910 residues: DNA mismatch repair protein MutS (910 aa).

A compositionally biased stretch (polar residues) spans 1-15 (MPRSAAQSEEQTLQG). The disordered stretch occupies residues 1 to 94 (MPRSAAQSEE…EPAWAHHSQV (94 aa)). Low complexity predominate over residues 44 to 54 (DASLSADAAAR). 726–733 (GPNASGKS) contributes to the ATP binding site.

The protein belongs to the DNA mismatch repair MutS family.

Functionally, this protein is involved in the repair of mismatches in DNA. It is possible that it carries out the mismatch recognition step. This protein has a weak ATPase activity. The polypeptide is DNA mismatch repair protein MutS (Synechococcus sp. (strain WH7803)).